The primary structure comprises 365 residues: U1 snRNP-associated protein usp109 (365 aa).

RRM domains lie at 3 to 79, 86 to 162, and 189 to 259; these read TSLW…VVPE, YMLF…SVKS, and TAVY…WARP.

Component of the U1 snRNP complex.

It localises to the nucleus. The chain is U1 snRNP-associated protein usp109 (usp109) from Schizosaccharomyces pombe (strain 972 / ATCC 24843) (Fission yeast).